The following is a 280-amino-acid chain: Maltodextrin transport system permease protein MalD (280 aa).

The next 6 helical transmembrane spans lie at 15–35 (LTYLYLIGLSIVIIYPLLITI), 77–97 (LIIALITMAVQTSIIVLAGYA), 110–130 (LVFFLIIQMVPTMAALTAFFV), 142–162 (WFLIFLYVGGGIPMNAWLMKG), 200–220 (VQALWAFMGPFGDYILSSFLL), and 244–264 (IAYFSAGAILIALPICILFFF). In terms of domain architecture, ABC transmembrane type-1 spans 73-265 (YLNTLIIALI…LPICILFFFL (193 aa)).

This sequence belongs to the binding-protein-dependent transport system permease family. MalFG subfamily.

Its subcellular location is the cell membrane. In terms of biological role, part of the binding-protein-dependent transport system for maltodextrin; probably responsible for the translocation of the substrate across the membrane. The protein is Maltodextrin transport system permease protein MalD (malD) of Streptococcus pneumoniae (strain ATCC BAA-255 / R6).